Consider the following 545-residue polypeptide: E3 ubiquitin-protein ligase ipaH9.8 (545 aa).

Residues 1 to 242 form an interaction with target proteins region; sequence MLPINNNFSL…YHGPRIYFSM (242 aa). 8 LRR repeats span residues 57–77, 78–99, 100–117, 118–139, 140–157, 158–179, 182–203, and 205–228; these read NSDE…NLPA, QITL…PVTL, KKLY…VLPP, ALES…PDSL, LTMN…SLPQ, ALKN…SEGN, VVRE…ILNL, and NECS…QRLT. Residues 243–250 form a linker region; sequence SDGQQNTL. Positions 251–545 are E3 ubiquitin-protein ligase catalytic domain; it reads HRPLADAVTA…PENGSQLHHS (295 aa). The NEL domain maps to 253–545; it reads PLADAVTAWF…PENGSQLHHS (293 aa). Cys337 serves as the catalytic Glycyl thioester intermediate.

It belongs to the LRR-containing bacterial E3 ligase family. As to quaternary structure, also interacts with human and mouse U2AF1 (U2AF35). Autoubiquitinated (in vitro). Ubiquitinated in the presence of host E1 ubiquitin-activating enzyme, E2 ubiquitin-conjugating enzyme and ubiquitin.

Its subcellular location is the secreted. The protein resides in the host cytoplasm. It localises to the host nucleus. The enzyme catalyses S-ubiquitinyl-[E2 ubiquitin-conjugating enzyme]-L-cysteine + [acceptor protein]-L-lysine = [E2 ubiquitin-conjugating enzyme]-L-cysteine + N(6)-ubiquitinyl-[acceptor protein]-L-lysine.. The protein operates within protein modification; protein ubiquitination. With respect to regulation, exists in an autoinhibited state in the absence of substrate protein, due to interactions of the leucine-rich repeats with NEL domain. Is activated upon binding to a substrate protein. Functionally, effector E3 ubiquitin ligase that interferes with host's ubiquitination pathway and modulates the acute inflammatory responses, thus facilitating bacterial colonization within the host cell. Interacts with IKBKG (NEMO) and TNIP1 (ABIN-1), a ubiquitin-binding adapter protein, which results in TNIP1-dependent 'Lys-27'-linked polyubiquitination of IKBKG. Consequently, polyubiquitinated IKBKG undergoes proteasome-dependent degradation, which perturbs NF-kappa-B activation during bacterial infection. Mediates polyubiquitination of host U2AF1, leading to its proteasomal degradation. Catalyzes 'Lys-48'-linked polyubiquitination and subsequent degradation of a subset of host guanylate-binding proteins (GBP1, GBP2, GBP4 and GBP6), thereby suppressing host cell defense. In contrast, host GBP3 and GBP7 are not ubiquitinated by IpaH9.8. Uses UBE2D2 (UBCH5B) as an E2 ubiquitin-conjugating enzyme. This Shigella flexneri protein is E3 ubiquitin-protein ligase ipaH9.8.